The primary structure comprises 239 residues: 7-cyano-7-deazaguanine synthase (239 aa).

Residue phenylalanine 13–leucine 23 coordinates ATP. Zn(2+) contacts are provided by cysteine 192, cysteine 201, cysteine 204, and cysteine 207.

The protein belongs to the QueC family. Zn(2+) is required as a cofactor.

It catalyses the reaction 7-carboxy-7-deazaguanine + NH4(+) + ATP = 7-cyano-7-deazaguanine + ADP + phosphate + H2O + H(+). It functions in the pathway purine metabolism; 7-cyano-7-deazaguanine biosynthesis. Functionally, catalyzes the ATP-dependent conversion of 7-carboxy-7-deazaguanine (CDG) to 7-cyano-7-deazaguanine (preQ(0)). The polypeptide is 7-cyano-7-deazaguanine synthase (Shewanella sp. (strain MR-7)).